The sequence spans 321 residues: MATH domain and coiled-coil domain-containing protein At3g58260 (321 aa).

An MATH domain is found at 6–135; the sequence is NNTFTWVIKN…NDEVMVAVAV (130 aa). The stretch at 232–283 forms a coiled coil; it reads KLDWLEKKLDELFEKKKEEADKIRMQNIEEELKDLRQKCSSLEALLKKEKTG.

This chain is MATH domain and coiled-coil domain-containing protein At3g58260, found in Arabidopsis thaliana (Mouse-ear cress).